The following is a 427-amino-acid chain: Gamma-glutamyl phosphate reductase (427 aa).

The protein belongs to the gamma-glutamyl phosphate reductase family.

The protein localises to the cytoplasm. It catalyses the reaction L-glutamate 5-semialdehyde + phosphate + NADP(+) = L-glutamyl 5-phosphate + NADPH + H(+). It functions in the pathway amino-acid biosynthesis; L-proline biosynthesis; L-glutamate 5-semialdehyde from L-glutamate: step 2/2. Its function is as follows. Catalyzes the NADPH-dependent reduction of L-glutamate 5-phosphate into L-glutamate 5-semialdehyde and phosphate. The product spontaneously undergoes cyclization to form 1-pyrroline-5-carboxylate. The protein is Gamma-glutamyl phosphate reductase of Gluconobacter oxydans (strain 621H) (Gluconobacter suboxydans).